The sequence spans 574 residues: Ankyrin repeat protein B19 (574 aa).

ANK repeat units lie at residues 56–87 (TGYT…DVTM), 135–164 (IKSR…DPNF), 167–213 (DGYT…NLNA), 217–249 (CGNT…NFEI), 253–285 (HGLT…NVGE), and 327–356 (EGKT…DINA). In terms of domain architecture, F-box spans 541 to 574 (NCLLTLLPSEIIYEILYMLTINDLYNISYPPTKV).

The protein belongs to the poxvirinae B18 protein family.

In Vaccinia virus (strain Western Reserve) (VACV), this protein is Ankyrin repeat protein B19.